The primary structure comprises 585 residues: Putative indole-3-acetic acid-amido synthetase GH3.9 (585 aa).

This sequence belongs to the IAA-amido conjugating enzyme family.

Functionally, catalyzes the synthesis of indole-3-acetic acid (IAA)-amino acid conjugates, providing a mechanism for the plant to cope with the presence of excess auxin. This is Putative indole-3-acetic acid-amido synthetase GH3.9 (GH3.9) from Arabidopsis thaliana (Mouse-ear cress).